The following is a 242-amino-acid chain: 1-(5-phosphoribosyl)-5-[(5-phosphoribosylamino)methylideneamino] imidazole-4-carboxamide isomerase (242 aa).

Aspartate 8 functions as the Proton acceptor in the catalytic mechanism. Residue aspartate 129 is the Proton donor of the active site.

It belongs to the HisA/HisF family.

It localises to the cytoplasm. The catalysed reaction is 1-(5-phospho-beta-D-ribosyl)-5-[(5-phospho-beta-D-ribosylamino)methylideneamino]imidazole-4-carboxamide = 5-[(5-phospho-1-deoxy-D-ribulos-1-ylimino)methylamino]-1-(5-phospho-beta-D-ribosyl)imidazole-4-carboxamide. Its pathway is amino-acid biosynthesis; L-histidine biosynthesis; L-histidine from 5-phospho-alpha-D-ribose 1-diphosphate: step 4/9. The chain is 1-(5-phosphoribosyl)-5-[(5-phosphoribosylamino)methylideneamino] imidazole-4-carboxamide isomerase from Dictyoglomus turgidum (strain DSM 6724 / Z-1310).